The sequence spans 588 residues: MRTHFCGLVDETLIGQTVTLAGWTDVARNLGGVCFIDLRDHEGIVQVTVEPVAGDDASAELFKVAASLGYEDVLQVEGVVRARHAVNDKLRSGKVEVIATRISILNKAAPLPFHAHENPGEETRLKYRYLDLRRPEMQRMQRTRIKLVQALRRHLDARDFQDIETPILTKATPEGARDFLVPARMHPGEFYALPQSPQLFKQILMVAGFDRYYQIARCFRDEALRADRQLEFTQLDMEFAFVRERDVQDFVEDMIRAIFKEVVDVDLAAQFPRMTWAEAMRRYGSDKPDLRIALELVDVAELVKASQFPVFTAAADDADGRVAALLIPGGASLSRKQIDEYAAHAAKYGAKGLAYIKLSETGEVSSPIAKFFSEESFAALLKHVGASNGDIVFFGAGGYTKVSDFMGALRLKAGKDFNLVADGWAPLWVTDFPMFEWDDEAQRYVALHHPFTAPAVDDIADLRANARTAVSRGYDMVLNGNEIGGGSIRIHRPDMQSAVFELLGIGAEEARAKFGFLLDALNYGAPPHGGIAFGIDRIAALMAGTESIRDVIPFPKTTGAQDLMTDAPSPIAADQLAEVHVQVRPKQV.

E174 lines the L-aspartate pocket. The segment at 198 to 201 (QLFK) is aspartate. R220 serves as a coordination point for L-aspartate. ATP contacts are provided by residues 220–222 (RDE) and Q229. H448 contacts L-aspartate. E482 provides a ligand contact to ATP. R489 serves as a coordination point for L-aspartate. Residue 534 to 537 (GIDR) coordinates ATP.

It belongs to the class-II aminoacyl-tRNA synthetase family. Type 1 subfamily. As to quaternary structure, homodimer.

It localises to the cytoplasm. It carries out the reaction tRNA(Asp) + L-aspartate + ATP = L-aspartyl-tRNA(Asp) + AMP + diphosphate. Functionally, catalyzes the attachment of L-aspartate to tRNA(Asp) in a two-step reaction: L-aspartate is first activated by ATP to form Asp-AMP and then transferred to the acceptor end of tRNA(Asp). The sequence is that of Aspartate--tRNA ligase from Xanthomonas euvesicatoria pv. vesicatoria (strain 85-10) (Xanthomonas campestris pv. vesicatoria).